A 64-amino-acid chain; its full sequence is Putative antitoxin VapB51 (64 aa).

Functionally, possibly the antitoxin component of a type II toxin-antitoxin (TA) system. Its cognate toxin is VapC51. This Mycobacterium tuberculosis (strain ATCC 25618 / H37Rv) protein is Putative antitoxin VapB51.